A 524-amino-acid chain; its full sequence is Translation initiation factor eIF2B subunit delta (524 aa).

Positions 1–174 (MAAVAVAVRE…RQQVPTRKDY (174 aa)) are disordered. Ala2 carries the N-acetylalanine modification. Composition is skewed to basic and acidic residues over residues 8-20 (VREESRSEMKTEL) and 31-40 (LTQEEKLQLR). Ser12 is subject to Phosphoserine. Residues 41-51 (KEKKQQKKKRK) are compositionally biased toward basic residues. A Phosphothreonine modification is found at Thr86. Basic and acidic residues-rich tracts occupy residues 96 to 121 (SKAELRAERRAKQEAERALKQARKGE) and 161 to 174 (RKPDRQQVPTRKDY). The may bind the chemical integrated stress response (ISR) inhibitor ISRIB stretch occupies residues 171–180 (RKDYGSKVSL).

Belongs to the eIF-2B alpha/beta/delta subunits family. As to quaternary structure, component of the translation initiation factor 2B (eIF2B) complex which is a heterodecamer of two sets of five different subunits: alpha, beta, gamma, delta and epsilon. Subunits alpha, beta and delta comprise a regulatory subcomplex and subunits epsilon and gamma comprise a catalytic subcomplex. Within the complex, the hexameric regulatory complex resides at the center, with the two heterodimeric catalytic subcomplexes bound on opposite sides.

Its subcellular location is the cytoplasm. It localises to the cytosol. With respect to regulation, activated by the chemical integrated stress response (ISR) inhibitor ISRIB which stimulates guanine nucleotide exchange factor activity for both phosphorylated and unphosphorylated eIF2. Its function is as follows. Acts as a component of the translation initiation factor 2B (eIF2B) complex, which catalyzes the exchange of GDP for GTP on eukaryotic initiation factor 2 (eIF2) gamma subunit. Its guanine nucleotide exchange factor activity is repressed when bound to eIF2 complex phosphorylated on the alpha subunit, thereby limiting the amount of methionyl-initiator methionine tRNA available to the ribosome and consequently global translation is repressed. This is Translation initiation factor eIF2B subunit delta (Eif2b4) from Rattus norvegicus (Rat).